A 173-amino-acid polypeptide reads, in one-letter code: Large ribosomal subunit protein uL5 (173 aa).

The protein belongs to the universal ribosomal protein uL5 family. In terms of assembly, part of the 50S ribosomal subunit; contacts the 5S rRNA and probably tRNA. Forms a bridge to the 30S subunit in the 70S ribosome.

Functionally, this is one of the proteins that bind and probably mediate the attachment of the 5S RNA into the large ribosomal subunit, where it forms part of the central protuberance. In the 70S ribosome it contacts protein S13 of the 30S subunit (bridge B1b), connecting the 2 subunits; this bridge is implicated in subunit movement. May contact the P site tRNA; the 5S rRNA and some of its associated proteins might help stabilize positioning of ribosome-bound tRNAs. The protein is Large ribosomal subunit protein uL5 of Nitrosopumilus maritimus (strain SCM1).